The chain runs to 521 residues: Cholesterol side-chain cleavage enzyme, mitochondrial (521 aa).

Residues 1–39 (MLAKGLPPRSVLVKGCQTFLSAPREGLGRLRVPTGEGAG) constitute a mitochondrion transit peptide. Residue C462 coordinates heme.

Belongs to the cytochrome P450 family. As to quaternary structure, interacts with FDX1/adrenodoxin. It depends on heme as a cofactor.

It localises to the mitochondrion inner membrane. It carries out the reaction 6 reduced [adrenodoxin] + cholesterol + 3 O2 + 6 H(+) = 4-methylpentanal + pregnenolone + 6 oxidized [adrenodoxin] + 4 H2O. It catalyses the reaction 2 reduced [adrenodoxin] + cholesterol + O2 + 2 H(+) = (22R)-hydroxycholesterol + 2 oxidized [adrenodoxin] + H2O. The enzyme catalyses (22R)-hydroxycholesterol + 2 reduced [adrenodoxin] + O2 + 2 H(+) = (20R,22R)-20,22-dihydroxycholesterol + 2 oxidized [adrenodoxin] + H2O. The catalysed reaction is (20R,22R)-20,22-dihydroxycholesterol + 2 reduced [adrenodoxin] + O2 + 2 H(+) = 4-methylpentanal + pregnenolone + 2 oxidized [adrenodoxin] + 2 H2O. Its pathway is lipid metabolism; C21-steroid hormone metabolism. It functions in the pathway steroid metabolism; cholesterol metabolism. Its function is as follows. A cytochrome P450 monooxygenase that catalyzes the side-chain hydroxylation and cleavage of cholesterol to pregnenolone, the precursor of most steroid hormones. Catalyzes three sequential oxidation reactions of cholesterol, namely the hydroxylation at C22 followed with the hydroxylation at C20 to yield 20R,22R-hydroxycholesterol that is further cleaved between C20 and C22 to yield the C21-steroid pregnenolone and 4-methylpentanal. Mechanistically, uses molecular oxygen inserting one oxygen atom into a substrate and reducing the second into a water molecule. Two electrons are provided by NADPH via a two-protein mitochondrial transfer system comprising flavoprotein FDXR (adrenodoxin/ferredoxin reductase) and nonheme iron-sulfur protein FDX1 or FDX2 (adrenodoxin/ferredoxin). The polypeptide is Cholesterol side-chain cleavage enzyme, mitochondrial (Homo sapiens (Human)).